Here is a 150-residue protein sequence, read N- to C-terminus: Deoxyuridine 5'-triphosphate nucleotidohydrolase (150 aa).

Substrate-binding positions include arginine 69 to glycine 71, asparagine 82, and threonine 86 to aspartate 88.

This sequence belongs to the dUTPase family. Requires Mg(2+) as cofactor.

It catalyses the reaction dUTP + H2O = dUMP + diphosphate + H(+). It participates in pyrimidine metabolism; dUMP biosynthesis; dUMP from dCTP (dUTP route): step 2/2. Functionally, this enzyme is involved in nucleotide metabolism: it produces dUMP, the immediate precursor of thymidine nucleotides and it decreases the intracellular concentration of dUTP so that uracil cannot be incorporated into DNA. The chain is Deoxyuridine 5'-triphosphate nucleotidohydrolase from Syntrophus aciditrophicus (strain SB).